The primary structure comprises 123 residues: MPAKAQPAGKKGSKKAKAPRPSGGKKRRRRRKESYGIYIYKVLKQVHPDTGISSRAMSIMNSFVNDVFERIAAEASRLAHYNKKSTITSREVQTVVRLLLPGELAKHAVSEGTKAVTKYTTSK.

Residues 1–10 (MPAKAQPAGK) are compositionally biased toward low complexity. Positions 1–33 (MPAKAQPAGKKGSKKAKAPRPSGGKKRRRRRKE) are disordered. Basic residues predominate over residues 11-32 (KGSKKAKAPRPSGGKKRRRRRK). An O-linked (GlcNAc) serine glycan is attached at Ser110. Lys118 participates in a covalent cross-link: Glycyl lysine isopeptide (Lys-Gly) (interchain with G-Cter in ubiquitin).

This sequence belongs to the histone H2B family. In terms of assembly, the nucleosome is a histone octamer containing two molecules each of H2A, H2B, H3 and H4 assembled in one H3-H4 heterotetramer and two H2A-H2B heterodimers. The octamer wraps approximately 147 bp of DNA. In terms of processing, monoubiquitination of Lys-118 gives a specific tag for epigenetic transcriptional activation and is also prerequisite for histone H3 'Lys-4' and 'Lys-79' methylation. GlcNAcylation at Ser-110 promotes monoubiquitination of Lys-118. It fluctuates in response to extracellular glucose, and associates with transcribed genes.

The protein resides in the nucleus. It localises to the chromosome. Core component of nucleosome. Nucleosomes wrap and compact DNA into chromatin, limiting DNA accessibility to the cellular machineries which require DNA as a template. Histones thereby play a central role in transcription regulation, DNA repair, DNA replication and chromosomal stability. DNA accessibility is regulated via a complex set of post-translational modifications of histones, also called histone code, and nucleosome remodeling. This chain is Late histone H2B.L1, found in Strongylocentrotus purpuratus (Purple sea urchin).